The following is a 77-amino-acid chain: Large ribosomal subunit protein uL29 (77 aa).

This sequence belongs to the universal ribosomal protein uL29 family.

The polypeptide is Large ribosomal subunit protein uL29 (Gluconobacter oxydans (strain 621H) (Gluconobacter suboxydans)).